A 146-amino-acid polypeptide reads, in one-letter code: 3-hydroxyacyl-[acyl-carrier-protein] dehydratase FabZ (146 aa).

The active site involves His-48.

It belongs to the thioester dehydratase family. FabZ subfamily.

Its subcellular location is the cytoplasm. It carries out the reaction a (3R)-hydroxyacyl-[ACP] = a (2E)-enoyl-[ACP] + H2O. In terms of biological role, involved in unsaturated fatty acids biosynthesis. Catalyzes the dehydration of short chain beta-hydroxyacyl-ACPs and long chain saturated and unsaturated beta-hydroxyacyl-ACPs. The chain is 3-hydroxyacyl-[acyl-carrier-protein] dehydratase FabZ from Paracidovorax citrulli (strain AAC00-1) (Acidovorax citrulli).